A 735-amino-acid chain; its full sequence is Urea active transporter (735 aa).

Over 1-14 the chain is Cytoplasmic; the sequence is MGEFKPPLPQGAGY. A helical transmembrane segment spans residues 15-35; sequence AIVLGLGAVFAGMMVLTTYLL. The Extracellular portion of the chain corresponds to 36 to 85; it reads KRYQKEIITAEEFTTAGRSVKTGLVAAAVVSSWIWCSTLLTSSTKEYADG. Residues 86-106 form a helical membrane-spanning segment; the sequence is IFGGYAYAAGACFQIIAFAIL. Over 107-130 the chain is Cytoplasmic; sequence AIKTKQMAPNAHTYLELVRTRYGK. Residues 131-151 traverse the membrane as a helical segment; it reads IGHGCYLFYAIATNILVTSML. Over 152 to 166 the chain is Extracellular; it reads LTSGSAVFSDLTGMN. The chain crosses the membrane as a helical span at residues 167 to 187; it reads TIASCFLLPVGVVVYTLFGGI. At 188–189 the chain is on the cytoplasmic side; sequence KA. Residues 190–210 form a helical membrane-spanning segment; the sequence is TFLTDYMHTCVIIIIVLVFAF. Residues 211-253 lie on the Extracellular side of the membrane; the sequence is KVYATSDVLGSPGKVYDLVREAAKRHPVDGNYQGEYMTMTSKS. A helical transmembrane segment spans residues 254–274; that stretch reads AGILLIINLIGNFGTVFLDNG. Residues 275-295 are Cytoplasmic-facing; it reads YWNKAISASPAASLKAYAIGG. The helical transmembrane segment at 296–316 threads the bilayer; that stretch reads LAWFAVPSLISLTMGLACLAV. Residues 317-343 lie on the Extracellular side of the membrane; sequence ETSPNFPTYPDPLTSFQANSGLVLPAA. Residues 344 to 364 form a helical membrane-spanning segment; that stretch reads AIAIMGKGGAVASLLMIFMAV. The Cytoplasmic portion of the chain corresponds to 365–403; the sequence is TSAMSAELIAVSSVFTYDIYREYIDPRASGKKLIYTSHV. The helical transmembrane segment at 404–424 threads the bilayer; sequence ACIFFGLAMSGFSVGLYYGGI. Position 425 (S425) is a topological domain, extracellular. The helical transmembrane segment at 426-446 threads the bilayer; the sequence is MGYIYEMMGIIISSAVLPVVL. Over 447 to 454 the chain is Cytoplasmic; that stretch reads TLCSKDMN. The helical transmembrane segment at 455–475 threads the bilayer; the sequence is LVAAVVSPILGTGLAIMSWLV. Topologically, residues 476–496 are extracellular; sequence CTKSLYKELTVDTTFMDYPML. The helical transmembrane segment at 497–517 threads the bilayer; sequence TGNLVALLSPAIFIPILTYVF. Topologically, residues 518–618 are cytoplasmic; sequence KPQNFDWEKM…EQRELARGLK (101 aa). Residues 553 to 572 are disordered; that stretch reads ANDKEQEEETNSLVSDSEKN. Residues 619–639 form a helical membrane-spanning segment; the sequence is IAYFLCVFFALAFLVVWPMPM. At 640–650 the chain is on the extracellular side; sequence YGSKYIFSKKF. A helical transmembrane segment spans residues 651–671; it reads FTGWVVVMIIWLFFSAFAVCI. Over 672–735 the chain is Cytoplasmic; it reads YPLWEGRHGI…SHFGQVDEII (64 aa).

It belongs to the sodium:solute symporter (SSF) (TC 2.A.21) family. May polymerize.

Its subcellular location is the membrane. Functionally, required for active transport of urea. The sequence is that of Urea active transporter (DUR3) from Saccharomyces cerevisiae (strain ATCC 204508 / S288c) (Baker's yeast).